The following is a 135-amino-acid chain: MLSPKKMKYRKRMRGRLKGKPTGGTDLTFGDFGLQATECGYINARQIEAARIALTRKIKRTGKTWIRFFPDKPVTKKPAEVRMGKGKGPTDAWVAAIRPGRILYEMEGVPRELAKEALRLAAHKLSVKTRFVERS.

This sequence belongs to the universal ribosomal protein uL16 family. In terms of assembly, part of the 50S ribosomal subunit.

Binds 23S rRNA and is also seen to make contacts with the A and possibly P site tRNAs. This chain is Large ribosomal subunit protein uL16, found in Desulforapulum autotrophicum (strain ATCC 43914 / DSM 3382 / VKM B-1955 / HRM2) (Desulfobacterium autotrophicum).